Here is a 418-residue protein sequence, read N- to C-terminus: NADH-quinone oxidoreductase subunit D (418 aa).

This sequence belongs to the complex I 49 kDa subunit family. In terms of assembly, NDH-1 is composed of 14 different subunits. Subunits NuoB, C, D, E, F, and G constitute the peripheral sector of the complex.

Its subcellular location is the cell inner membrane. It catalyses the reaction a quinone + NADH + 5 H(+)(in) = a quinol + NAD(+) + 4 H(+)(out). Functionally, NDH-1 shuttles electrons from NADH, via FMN and iron-sulfur (Fe-S) centers, to quinones in the respiratory chain. The immediate electron acceptor for the enzyme in this species is believed to be ubiquinone. Couples the redox reaction to proton translocation (for every two electrons transferred, four hydrogen ions are translocated across the cytoplasmic membrane), and thus conserves the redox energy in a proton gradient. This Neisseria meningitidis serogroup B (strain ATCC BAA-335 / MC58) protein is NADH-quinone oxidoreductase subunit D.